We begin with the raw amino-acid sequence, 342 residues long: Holliday junction branch migration complex subunit RuvB (342 aa).

A large ATPase domain (RuvB-L) region spans residues M1–Y179. ATP contacts are provided by residues L18, R19, G60, K63, T64, T65, E126–F128, R169, Y179, and R216. Mg(2+) is bound at residue T64. The tract at residues N180–E250 is small ATPAse domain (RuvB-S). Positions I253 to E342 are head domain (RuvB-H). 3 residues coordinate DNA: R289, R308, and R313.

It belongs to the RuvB family. Homohexamer. Forms an RuvA(8)-RuvB(12)-Holliday junction (HJ) complex. HJ DNA is sandwiched between 2 RuvA tetramers; dsDNA enters through RuvA and exits via RuvB. An RuvB hexamer assembles on each DNA strand where it exits the tetramer. Each RuvB hexamer is contacted by two RuvA subunits (via domain III) on 2 adjacent RuvB subunits; this complex drives branch migration. In the full resolvosome a probable DNA-RuvA(4)-RuvB(12)-RuvC(2) complex forms which resolves the HJ.

The protein localises to the cytoplasm. The enzyme catalyses ATP + H2O = ADP + phosphate + H(+). In terms of biological role, the RuvA-RuvB-RuvC complex processes Holliday junction (HJ) DNA during genetic recombination and DNA repair, while the RuvA-RuvB complex plays an important role in the rescue of blocked DNA replication forks via replication fork reversal (RFR). RuvA specifically binds to HJ cruciform DNA, conferring on it an open structure. The RuvB hexamer acts as an ATP-dependent pump, pulling dsDNA into and through the RuvAB complex. RuvB forms 2 homohexamers on either side of HJ DNA bound by 1 or 2 RuvA tetramers; 4 subunits per hexamer contact DNA at a time. Coordinated motions by a converter formed by DNA-disengaged RuvB subunits stimulates ATP hydrolysis and nucleotide exchange. Immobilization of the converter enables RuvB to convert the ATP-contained energy into a lever motion, pulling 2 nucleotides of DNA out of the RuvA tetramer per ATP hydrolyzed, thus driving DNA branch migration. The RuvB motors rotate together with the DNA substrate, which together with the progressing nucleotide cycle form the mechanistic basis for DNA recombination by continuous HJ branch migration. Branch migration allows RuvC to scan DNA until it finds its consensus sequence, where it cleaves and resolves cruciform DNA. This Rickettsia bellii (strain RML369-C) protein is Holliday junction branch migration complex subunit RuvB.